A 268-amino-acid polypeptide reads, in one-letter code: Peptide transport system ATP-binding protein SapF (268 aa).

Positions 6-251 (LEVRNLSKTF…PLHELTKRLI (246 aa)) constitute an ABC transporter domain. 47–54 (GENGSGKS) contributes to the ATP binding site.

It belongs to the ABC transporter superfamily.

It is found in the cell inner membrane. Involved in a peptide intake transport system that plays a role in the resistance to antimicrobial peptides. This is Peptide transport system ATP-binding protein SapF (sapF) from Escherichia coli O6:H1 (strain CFT073 / ATCC 700928 / UPEC).